A 372-amino-acid polypeptide reads, in one-letter code: Cytochrome b (372 aa).

4 helical membrane-spanning segments follow: residues 25–45 (FGSM…FLAI), 69–90 (WIMQ…YIHI), 105–125 (WLSG…GYVL), and 170–190 (FFAL…IHII). Positions 75 and 89 each coordinate heme b. Heme b contacts are provided by His-174 and His-188. A ubiquinone is bound at residue His-193. Transmembrane regions (helical) follow at residues 218-238 (YKDM…LSFS), 280-300 (LGGT…PFTH), 312-332 (LSQI…WTAT), and 339-358 (FISI…IMNP).

Belongs to the cytochrome b family. In terms of assembly, the cytochrome bc1 complex contains 3 respiratory subunits (MT-CYB, CYC1 and UQCRFS1), 2 core proteins (UQCRC1 and UQCRC2) and probably 6 low-molecular weight proteins. It depends on heme b as a cofactor.

The protein localises to the mitochondrion inner membrane. Its function is as follows. Component of the ubiquinol-cytochrome c reductase complex (complex III or cytochrome b-c1 complex) that is part of the mitochondrial respiratory chain. The b-c1 complex mediates electron transfer from ubiquinol to cytochrome c. Contributes to the generation of a proton gradient across the mitochondrial membrane that is then used for ATP synthesis. This Walterinnesia aegyptia (Desert black snake) protein is Cytochrome b (MT-CYB).